Reading from the N-terminus, the 966-residue chain is Leucine--tRNA ligase (966 aa).

Residues 41-51 (PYLNGNLHAGH) carry the 'HIGH' region motif. The short motif at 632–636 (KMSKS) is the 'KMSKS' region element. K635 is a binding site for ATP.

It belongs to the class-I aminoacyl-tRNA synthetase family.

It is found in the cytoplasm. It catalyses the reaction tRNA(Leu) + L-leucine + ATP = L-leucyl-tRNA(Leu) + AMP + diphosphate. This Methanosarcina mazei (strain ATCC BAA-159 / DSM 3647 / Goe1 / Go1 / JCM 11833 / OCM 88) (Methanosarcina frisia) protein is Leucine--tRNA ligase.